Here is a 1634-residue protein sequence, read N- to C-terminus: Probable serine/threonine-protein kinase DDB_G0282895 (1634 aa).

Residues Tyr40–Tyr63 form an MORN 1 repeat. Positions Gln84–Asn131 are disordered. Positions Lys89 to Pro109 are enriched in low complexity. Residues Ile110–Gln119 show a composition bias toward polar residues. Low complexity predominate over residues Asn120 to Asn131. Residues Tyr169–Ser191 form an MORN 2 repeat. Composition is skewed to low complexity over residues Ser273–Thr292 and Ser318–Ser339. 3 disordered regions span residues Ser273 to Gln367, Thr658 to Val750, and Ser783 to Gln816. The segment covering Gly340–Ser351 has biased composition (polar residues). Low complexity-rich tracts occupy residues Gln352–Gln367, Thr658–Thr688, and Pro703–Ser715. Residues Asp716–Ser732 are compositionally biased toward polar residues. Residues Asn787–Asn813 show a composition bias toward low complexity. Residues Ile1255–Tyr1275 form a helical membrane-spanning segment. Residues Leu1377–Cys1634 enclose the Protein kinase domain. Residues Leu1383 to Val1391 and Lys1404 contribute to the ATP site. Asp1500 functions as the Proton acceptor in the catalytic mechanism.

This sequence belongs to the protein kinase superfamily. TKL Ser/Thr protein kinase family.

Its subcellular location is the membrane. The catalysed reaction is L-seryl-[protein] + ATP = O-phospho-L-seryl-[protein] + ADP + H(+). It catalyses the reaction L-threonyl-[protein] + ATP = O-phospho-L-threonyl-[protein] + ADP + H(+). The sequence is that of Probable serine/threonine-protein kinase DDB_G0282895 from Dictyostelium discoideum (Social amoeba).